The following is a 114-amino-acid chain: Dolichyl-diphosphooligosaccharide--protein glycosyltransferase subunit DAD1 (114 aa).

Residues 1 to 30 (MPKAAGDAKLLIQSLNKAYAATPTNLKIID) lie on the Cytoplasmic side of the membrane. A helical membrane pass occupies residues 31-51 (LYVVFAVVTALLQVVYMGIVG). A topological domain (lumenal) is located at residue Ser52. The chain crosses the membrane as a helical span at residues 53-73 (FPFNSFLSGVLSCIGTAVLAV). Over 74–93 (CHRIQVNKDNKEFKDLAPER) the chain is Cytoplasmic. The chain crosses the membrane as a helical span at residues 94–114 (AFADFVLCSLVLHLVIMNFLG).

This sequence belongs to the DAD/OST2 family. As to quaternary structure, component of the oligosaccharyltransferase (OST) complex.

It is found in the endoplasmic reticulum membrane. Its pathway is protein modification; protein glycosylation. Subunit of the oligosaccharyl transferase (OST) complex that catalyzes the initial transfer of a defined glycan (Glc(3)Man(9)GlcNAc(2) in eukaryotes) from the lipid carrier dolichol-pyrophosphate to an asparagine residue within an Asn-X-Ser/Thr consensus motif in nascent polypeptide chains, the first step in protein N-glycosylation. N-glycosylation occurs cotranslationally and the complex associates with the Sec61 complex at the channel-forming translocon complex that mediates protein translocation across the endoplasmic reticulum (ER). All subunits are required for a maximal enzyme activity. This Hordeum vulgare (Barley) protein is Dolichyl-diphosphooligosaccharide--protein glycosyltransferase subunit DAD1 (DAD1).